Consider the following 214-residue polypeptide: tRNA (guanine-N(7)-)-methyltransferase (214 aa).

Glu-43, Glu-68, Asp-95, and Asp-117 together coordinate S-adenosyl-L-methionine. Residue Asp-117 is part of the active site. Residues Lys-121, Asp-153, and 190 to 193 (TEYE) each bind substrate.

The protein belongs to the class I-like SAM-binding methyltransferase superfamily. TrmB family.

The enzyme catalyses guanosine(46) in tRNA + S-adenosyl-L-methionine = N(7)-methylguanosine(46) in tRNA + S-adenosyl-L-homocysteine. The protein operates within tRNA modification; N(7)-methylguanine-tRNA biosynthesis. In terms of biological role, catalyzes the formation of N(7)-methylguanine at position 46 (m7G46) in tRNA. This is tRNA (guanine-N(7)-)-methyltransferase from Staphylococcus aureus (strain JH1).